The primary structure comprises 409 residues: Putative competence-damage inducible protein (409 aa).

This sequence belongs to the CinA family.

The protein is Putative competence-damage inducible protein of Clostridium botulinum (strain Loch Maree / Type A3).